We begin with the raw amino-acid sequence, 327 residues long: Fe-S cluster assembly protein DRE2 (327 aa).

The span at 1 to 14 (MSPATVTIDTTPDF) shows a compositional bias: polar residues. Disordered stretches follow at residues 1 to 20 (MSPA…GGAP) and 153 to 179 (NKGE…AAAA). Residues 17 to 144 (GGAPHSTLLL…EKPAEEVAAV (128 aa)) are N-terminal SAM-like domain. Residues 145 to 214 (PLKFLKKKNK…EDELMTEEDL (70 aa)) form a linker region. Residues 164–179 (PAAATQPTAPAPAAAA) are compositionally biased toward low complexity. [2Fe-2S] cluster contacts are provided by cysteine 224, cysteine 235, cysteine 238, and cysteine 240. A fe-S binding site A region spans residues 224 to 240 (CAPKPGKKRRACKDCTC). 4 residues coordinate [4Fe-4S] cluster: cysteine 290, cysteine 293, cysteine 301, and cysteine 304. 2 consecutive short sequence motifs (cx2C motif) follow at residues 290-293 (CGSC) and 301-304 (CADC). The tract at residues 290 to 304 (CGSCALGDAFRCADC) is fe-S binding site B.

This sequence belongs to the anamorsin family. As to quaternary structure, monomer. Interacts with TAH18. Interacts with MIA40. [2Fe-2S] cluster serves as cofactor. [4Fe-4S] cluster is required as a cofactor.

Its subcellular location is the cytoplasm. The protein resides in the mitochondrion intermembrane space. Functionally, component of the cytosolic iron-sulfur (Fe-S) protein assembly (CIA) machinery required for the maturation of extramitochondrial Fe-S proteins. Part of an electron transfer chain functioning in an early step of cytosolic Fe-S biogenesis, facilitating the de novo assembly of a [4Fe-4S] cluster on the scaffold complex CFD1-NBP35. Electrons are transferred to DRE2 from NADPH via the FAD- and FMN-containing protein TAH18. TAH18-DRE2 are also required for the assembly of the diferric tyrosyl radical cofactor of ribonucleotide reductase (RNR), probably by providing electrons for reduction during radical cofactor maturation in the catalytic small subunit RNR2. The protein is Fe-S cluster assembly protein DRE2 of Pyricularia oryzae (strain 70-15 / ATCC MYA-4617 / FGSC 8958) (Rice blast fungus).